Here is a 283-residue protein sequence, read N- to C-terminus: Probable endonuclease 4 (283 aa).

H69, H109, E145, D179, H182, H216, D229, H231, and E261 together coordinate Zn(2+).

It belongs to the AP endonuclease 2 family. Zn(2+) is required as a cofactor.

It carries out the reaction Endonucleolytic cleavage to 5'-phosphooligonucleotide end-products.. Endonuclease IV plays a role in DNA repair. It cleaves phosphodiester bonds at apurinic or apyrimidinic (AP) sites, generating a 3'-hydroxyl group and a 5'-terminal sugar phosphate. The chain is Probable endonuclease 4 from Campylobacter curvus (strain 525.92).